The sequence spans 886 residues: Conserved oligomeric Golgi complex subunit 1 (886 aa).

Positions 834–846 (SAERKSPIQEPVE) are enriched in basic and acidic residues. Residues 834-886 (SAERKSPIQEPVEKTATTTPTRKSGGNGARKGDSSKSKSSAASFFGMSQEWFR) are disordered. Phosphoserine is present on Ser-839. Positions 848-857 (TATTTPTRKS) are enriched in polar residues.

This sequence belongs to the COG1 family. In terms of assembly, component of the conserved oligomeric Golgi complex which is composed of eight different subunits and is required for normal Golgi morphology and localization.

The protein resides in the golgi apparatus membrane. In terms of biological role, required for normal Golgi function. This Drosophila melanogaster (Fruit fly) protein is Conserved oligomeric Golgi complex subunit 1.